The chain runs to 622 residues: 1-deoxy-D-xylulose-5-phosphate synthase (622 aa).

Thiamine diphosphate is bound by residues His71 and 112 to 114 (GHS). Asp143 is a binding site for Mg(2+). Thiamine diphosphate-binding positions include 144–145 (GA), Asn172, Tyr283, and Glu363. A Mg(2+)-binding site is contributed by Asn172.

This sequence belongs to the transketolase family. DXPS subfamily. As to quaternary structure, homodimer. Requires Mg(2+) as cofactor. It depends on thiamine diphosphate as a cofactor.

The catalysed reaction is D-glyceraldehyde 3-phosphate + pyruvate + H(+) = 1-deoxy-D-xylulose 5-phosphate + CO2. The protein operates within metabolic intermediate biosynthesis; 1-deoxy-D-xylulose 5-phosphate biosynthesis; 1-deoxy-D-xylulose 5-phosphate from D-glyceraldehyde 3-phosphate and pyruvate: step 1/1. In terms of biological role, catalyzes the acyloin condensation reaction between C atoms 2 and 3 of pyruvate and glyceraldehyde 3-phosphate to yield 1-deoxy-D-xylulose-5-phosphate (DXP). This is 1-deoxy-D-xylulose-5-phosphate synthase from Caldanaerobacter subterraneus subsp. tengcongensis (strain DSM 15242 / JCM 11007 / NBRC 100824 / MB4) (Thermoanaerobacter tengcongensis).